We begin with the raw amino-acid sequence, 344 residues long: Ion-translocating oxidoreductase complex subunit D (344 aa).

Helical transmembrane passes span 23-43, 44-64, 80-100, and 120-140; these read LVLG…GAGT, LLNL…MLAL, VTAL…LTLV, and PFNP…LEMT. Thr-172 is subject to FMN phosphoryl threonine. Transmembrane regions (helical) follow at residues 198-218, 222-242, 252-272, 285-305, and 306-326; these read LGGA…LFLL, LFTW…SLLF, GSPL…FIVT, LLFG…GGYP, and DGVA…DYYT.

This sequence belongs to the NqrB/RnfD family. As to quaternary structure, the complex is composed of six subunits: RnfA, RnfB, RnfC, RnfD, RnfE and RnfG. FMN serves as cofactor.

Its subcellular location is the cell inner membrane. In terms of biological role, part of a membrane-bound complex that couples electron transfer with translocation of ions across the membrane. This is Ion-translocating oxidoreductase complex subunit D from Pseudomonas paraeruginosa (strain DSM 24068 / PA7) (Pseudomonas aeruginosa (strain PA7)).